The primary structure comprises 259 residues: Haloacid dehalogenase-like hydrolase domain-containing protein 2 (259 aa).

Residues Asp-13 and Asn-15 each contribute to the Mg(2+) site. Substrate-binding positions include 13–15 and 46–47; these read DLN and TN. The stretch at 47–72 forms a coiled coil; the sequence is NTTKESKKDLLERLKKLEFEISEDEI. Lys-50 is subject to N6-succinyllysine. Position 179 (Lys-179) interacts with substrate. Residue Asp-204 coordinates Mg(2+).

It belongs to the HAD-like hydrolase superfamily. Mg(2+) serves as cofactor.

This is Haloacid dehalogenase-like hydrolase domain-containing protein 2 (Hdhd2) from Mus musculus (Mouse).